Consider the following 98-residue polypeptide: Large ribosomal subunit protein uL23 (98 aa).

This sequence belongs to the universal ribosomal protein uL23 family. In terms of assembly, part of the 50S ribosomal subunit. Contacts protein L29, and trigger factor when it is bound to the ribosome.

In terms of biological role, one of the early assembly proteins it binds 23S rRNA. One of the proteins that surrounds the polypeptide exit tunnel on the outside of the ribosome. Forms the main docking site for trigger factor binding to the ribosome. The protein is Large ribosomal subunit protein uL23 of Clostridium acetobutylicum (strain ATCC 824 / DSM 792 / JCM 1419 / IAM 19013 / LMG 5710 / NBRC 13948 / NRRL B-527 / VKM B-1787 / 2291 / W).